The following is a 243-amino-acid chain: Carboxy-S-adenosyl-L-methionine synthase (243 aa).

S-adenosyl-L-methionine-binding positions include Y39, 64–66 (GCS), 90–91 (DN), 118–119 (DL), N133, and R200.

The protein belongs to the class I-like SAM-binding methyltransferase superfamily. Cx-SAM synthase family. In terms of assembly, homodimer.

It carries out the reaction prephenate + S-adenosyl-L-methionine = carboxy-S-adenosyl-L-methionine + 3-phenylpyruvate + H2O. Functionally, catalyzes the conversion of S-adenosyl-L-methionine (SAM) to carboxy-S-adenosyl-L-methionine (Cx-SAM). The polypeptide is Carboxy-S-adenosyl-L-methionine synthase (Idiomarina loihiensis (strain ATCC BAA-735 / DSM 15497 / L2-TR)).